The following is an 89-amino-acid chain: Helix-loop-helix protein 15 (89 aa).

Residues 1–32 form a disordered region; that stretch reads MLMEDGGLDTTSEEYRKLSKAERRKRRRATPK. Over residues 22-32 the composition is skewed to basic residues; it reads ERRKRRRATPK. The segment at 32-45 is basic motif; the sequence is KYRNLHATRERIRV. The bHLH domain occupies 32–84; sequence KYRNLHATRERIRVESFNMAFSQLRALLPTLPVEKKLSKIEILRFSIAYISFL. The interval 46-84 is helix-loop-helix motif; the sequence is ESFNMAFSQLRALLPTLPVEKKLSKIEILRFSIAYISFL.

In terms of tissue distribution, expressed in sensory head neurons of the lateral ganglion.

It localises to the nucleus. Functionally, transcription factor which binds the E box motif 5'-CA[TC][AG]TG-3'. Involved in modulating physiological aging, probably by regulating expression of branched-chain amino acid transferase-1, bcat-1. The polypeptide is Helix-loop-helix protein 15 (Caenorhabditis elegans).